Reading from the N-terminus, the 169-residue chain is Peptide methionine sulfoxide reductase MsrA (169 aa).

Cys10 is a catalytic residue.

The protein belongs to the MsrA Met sulfoxide reductase family.

It catalyses the reaction L-methionyl-[protein] + [thioredoxin]-disulfide + H2O = L-methionyl-(S)-S-oxide-[protein] + [thioredoxin]-dithiol. The catalysed reaction is [thioredoxin]-disulfide + L-methionine + H2O = L-methionine (S)-S-oxide + [thioredoxin]-dithiol. Its function is as follows. Has an important function as a repair enzyme for proteins that have been inactivated by oxidation. Catalyzes the reversible oxidation-reduction of methionine sulfoxide in proteins to methionine. The polypeptide is Peptide methionine sulfoxide reductase MsrA (Streptococcus mutans serotype c (strain ATCC 700610 / UA159)).